Reading from the N-terminus, the 295-residue chain is RNA polymerase sigma-C factor (295 aa).

The short motif at 73–86 is the Polymerase core binding element; that stretch reads DLIQEANIGLMKAV. Residues 250–269 constitute a DNA-binding region (H-T-H motif); that stretch reads LSELGEHFGFSRERARQLEI.

Belongs to the sigma-70 factor family.

Functionally, sigma factors are initiation factors that promote the attachment of RNA polymerase to specific initiation sites and are then released. This sigma factor is essential for normal fruiting body formation. The protein is RNA polymerase sigma-C factor (sigC) of Myxococcus xanthus.